A 792-amino-acid polypeptide reads, in one-letter code: E3 UFM1-protein ligase 1 (792 aa).

At Ala-2 the chain carries N-acetylalanine. The interval 2–200 (ADAWEEIRRL…RGLFSAITRP (199 aa)) is mediates interaction with DDRGK1. Residues 2–212 (ADAWEEIRRL…VNSLISRYGF (211 aa)) form a required for E3 UFM1-protein ligase activity region. Residues 121–250 (DRLAEEVNDK…KAVFIPDIYS (130 aa)) form an involved in CDK5RAP3-binding region. A mediates interaction with TRIP4 region spans residues 200-400 (PTAVNSLISR…NPVHLITEED (201 aa)). Positions 412 to 471 (TSKKDKKDERRRKATEGSGSVRGGGGSNAREYKIKKTKKKGRKDDDSDDESSHTGKKKPE) are disordered. Omega-N-methylarginine is present on Arg-433. A compositionally biased stretch (basic and acidic residues) spans 453–471 (RKDDDSDDESSHTGKKKPE). Residue Ser-458 is modified to Phosphoserine. A mediates interaction with CDK5RAP3 region spans residues 488 to 682 (LQDAPEEFIS…QLKVTEDPAL (195 aa)). A Phosphothreonine modification is found at Thr-534. Phosphoserine is present on Ser-752.

Belongs to the UFL1 family. As to quaternary structure, catalytic component of the UFM1 ribosome E3 ligase (UREL) complex, composed of UFL1, DDRGK1 and CDK5RAP3. Interacts with E2-like enzyme UFC1. Interacts with RELA. Interacts with NBN; promoting recruitment to double-strand breaks following DNA damage. Interacts (when phosphorylated) with YWHAG/14-3-3-gamma; sequestering UFL1 and preventing its association with PDCD1/PD-1 substrate. Post-translationally, ubiquitinated, leading to its degradation by the proteasome. Interaction with CDK5RAP3 protects both proteins against ubiquitination and degradation via the proteasome. In terms of processing, phosphorylation at Thr-534 by AMPK promotes its interaction with YWHAG/14-3-3-gamma, thereby preventing UFL1 association with PDCD1/PD-1 substrate.

Its subcellular location is the endoplasmic reticulum membrane. It is found in the cytoplasm. The protein resides in the cytosol. The protein localises to the nucleus. It localises to the chromosome. E3 protein ligase that mediates ufmylation, the covalent attachment of the ubiquitin-like modifier UFM1 to lysine residues on target proteins, and which plays a key role in various processes, such as ribosome recycling, response to DNA damage, interferon response or reticulophagy (also called ER-phagy). Catalyzes ufmylation of many protein, such as CD274/PD-L1, CDK5RAP3, CYB5R3, DDRGK1, EIF6, histone H4, MRE11, P4HB, PDCD1/PD-1, TRIP4, RPN1, RPS20/uS10, RPL10/uL16, RPL26/uL24, SYVN1/HRD1 and TP53/p53. As part of the UREL complex, plays a key role in ribosome recycling by catalyzing mono-ufmylation of RPL26/uL24 subunit of the 60S ribosome. Ufmylation of RPL26/uL24 occurs on free 60S ribosomes following ribosome dissociation: it weakens the junction between post-termination 60S subunits and SEC61 translocons, promoting release and recycling of the large ribosomal subunit from the endoplasmic reticulum membrane. Ufmylation of RPL26/uL24 and subsequent 60S ribosome recycling either take place after normal termination of translation or after ribosome stalling during cotranslational translocation at the endoplasmic reticulum. Involved in reticulophagy in response to endoplasmic reticulum stress by mediating ufmylation of proteins such as CYB5R3 and RPN1, thereby promoting lysosomal degradation of ufmylated proteins. Ufmylation in response to endoplasmic reticulum stress is essential for processes such as hematopoiesis, blood vessel morphogenesis or inflammatory response. Regulates inflammation in response to endoplasmic reticulum stress by promoting reticulophagy, leading to inhibit the activity of the NF-kappa-B transcription factor. Mediates ufmylation of DDRGK1 and CDK5RAP3; the role of these modifications is however unclear: as both DDRGK1 and CDK5RAP3 act as substrate adapters for ufmylation, it is uncertain whether ufmylation of these proteins is, a collateral effect or is required for ufmylation. Acts as a negative regulator of T-cell activation by mediating ufmylation and stabilization of PDCD1/PD-1. Also involved in the response to DNA damage: recruited to double-strand break sites following DNA damage and mediates monoufmylation of histone H4 and ufmylation of MRE11. Mediates ufmylation of TP53/p53, promoting its stability. Catalyzes ufmylation of TRIP4, thereby playing a role in nuclear receptor-mediated transcription. Required for hematopoietic stem cell function and hematopoiesis. This chain is E3 UFM1-protein ligase 1, found in Bos taurus (Bovine).